A 2703-amino-acid chain; its full sequence is MYNGIGLPTPRGSGTNGYVQRNLSLVRGRRGERPDYKGEEELRHLEAALVKRPNPDILDHERKRRVELRCLELEEMMEEQGYEEQQIQEKVATFRLMLLEKDVNPGAKEETPGQRPVVTETHQLAELNEKKNERLRAAFGISDSYVDGSSFDPQRRAREAKQIAPEPPKPYSLVRETSSSRSPTPKQKKKKKKKDRGRRSESSSPRRERKKSSKKKKHRSESESKKRKHRSPTPKSKRKSKDKKRKRSRSTTPAPKSRRAHRSTSADSASSSDTSRSRSRSAAAKIHTTALTGQSPPLASGHQGEGDAPSVEPGATNIQQPSSPAPSTKQSSSPYEDKDKKEKSAVRPSPSPERSSTGPELPAPTPLLVEQHVDSPRPLAAIPSSQEPVNPSSEASPTRGCSPPKSPEKPPQSTSSESCPPSPQPTKGSRHASSSPESLKPTPAPGSRREISSSPTSKNRSHGRAKRDKSHSHTPSHRAGRSRSPATKRGRSRSRTPTKRGHSRSRSPQWRRSRSAQRWGKSRSPQRRGRSRSPQRPGWSRSRNTQRRGRSRSARRGRSHSRSPATRGRSRSRTPARRGRSRSRTPARRRSRSRTPARRRSRSRTPARRGRSRSRTPARRRSRTRSPVRRRSRSRSQARRSGRSRSRTPARRSGRSRSRTPARRGRSRSRTPARRSARSRSRTPARRGRSRSRTPARRRSRSRSLVRRGRSHSRTPQRRGRSGSSSERKNKSRTSQRRSRSNSSPEMKKSHVSSRRSRSLSSPRSKAKSLRRSLSGSSPCPKQKSQTPTRRSRSGSSPPKQKSKTPPRQSRSNSPQPKVKSGTPPRPGSVTNMQADECTATPQRQSHSESSPDGEVKSRTPSRQSCSGSSPRVKSSTPPRQSPSRSSSPQPKVKTVISPRGRSHSSSSSPSPSRVTSRTPQRKSRSISPCPKVDSRLRHSRSRSSSPDSKMELGTPLRHSGSTSPYLKSMLQTPPDQNLSGSKSPCPQKSRDSPTGSSGSFHLCPGVTPSSIVPGESCFSASFVQQKGHTQTWPDTSSPEVMQTQVESPLLQSKSQTSPKGSLSRSSSPVTELTARSPVKQDKSEISTDPKLKSGMSPEQSKTKPDSSIYPLVDSKSFLVQSRLEPSELKERLGLIQEDVASSCIPRDKFSPTQDRPESSTVLKVTPRVLLKERSGAGSPPGKRDQKSLLPNSSQDELMEVEKSEQPLSQVLPSLSPEHKEMPGSNIESSPEVEERPAVLSALDQSQSQPSKAAETPAVASCWSGPQVSPEHKELSHSPPRENSFESSLEFKNSGPVSEVNTGFSPEVKEELNGSFLNQTEADPSVDMKEQSRSSRRSSSELSPEVVEKVGLFSSQKVSSPVLETVQQRTPSRERSSSASPELKDGLPRTPSRRSRSGSSPGLRDGSGTPSRHSLSGSSPGMKDTPQTPSRGRSECDSSPEPKALPQTPRARSHSPSSPERNNKSVTPQRERSGSESSVEQKNLARTSPGQRSRSGSSQELDGKPSASPQERSESDSSPDSKPKTRTPLRQRSHSGSSPEVDSKSRHSPRLSRSGSSPEMKDKPRVLQRAQSGTDSSPEHKIPAPRALPRHSRSGSSSKERGPSPEGSSSSESSPEHAPKSRTARRGSRSSIEPKTKSHTPPRRRSSRSSPELTRKARVSRRSRSASSSPEIRSRTPPRRRRSPSVSSPEPTEKSRSSRRRRSVSSPRTKTTSRRGRSPSPKPRGLQRSRSRSRREKTRTTRRRDRSGSSQSTSRRRQRSRSRSRVTRRRRGGSGYHSRSPTRQESSRTSSRRRRGRSRTPLTSRKRSRSRTSPAPWKRSRSRASPATHRRSRSRTPLISRRRSRSRTSPVSRRRSRSVNRRRSRSRASPVSRRRSRSRTPPVTRRRSRSRTPTRRRSRSRTPPVTRRRSRSRTPPVTRRRSRSRTSPVTRRRSRSRTSPVTRRRSRSRTSPVTRRRSRSRTSPVTRRRSRSRTPPAIRRRSRSRTPLLPRKRSRSRSPLAIRRRSRSRTPRAARGKRSLTRSPPAIRRRSASGSSSDRSRSATPPATRNHSGSRTPPVALSSSRMSCFSRPSMSPTPLDRCRSPGMLEPLGSARTPMSVLQQTGGSMMDGPGPRIPDHPRSSVPENHAQSRIALALTAISLGTARPPPSMSAAGLAARMSQVPAPVPLMSLRTAPAANLASRIPAASAAAMNLASARTSAIPASVNLADSRTPAAAAAMNLASPRTAVAPSAVNLADPRTPAASAVNLAGARTPAALAALSLTGSGTPPTAANYPSSSRTPQAPTPANLVVGPRSAHGTAPVNIAGSRTPAGLAPTNLSSSRMAPALSGANLTSPRVPLSAYDRVSGRTSPLMLDRARSRTPPSAPSQSRMTSERERAPSPASRMVQASSQSLLPPAQDRPRSPVPSAFSDQSRSVVQTTPVAGSQSLSSGTVAKSTSSASDHNGMLSGPAPGISHAEGGEPPASTGAQQPSTLAALQPAKERRSSSSSSSSSSSSSSSSSSSSSSSSSGSSSSDSEGSSLPAQPEVALKRVPSPTPVPKEAIREGRPQEPTPAKRKRRSSSSSSSSSSSSSSSSSSSSSSSSSSSSSSSSSSSSSSSSSSPSPAKPGPQALPKPASPKKPPPGERRSRSPRKPIDSLRDSRSLSYSPVERRQPSPQPSPRDLQSSERVSWRGQRGDSHSPGHKRKETPSPRSNRHRSSRSP.

Met1 is modified (N-acetylmethionine). A coiled-coil region spans residues 60–92; that stretch reads HERKRRVELRCLELEEMMEEQGYEEQQIQEKVA. N6-acetyllysine is present on Lys101. Residues Lys108 and Lys130 each participate in a glycyl lysine isopeptide (Lys-Gly) (interchain with G-Cter in SUMO2) cross-link. Positions 141-1007 are disordered; that stretch reads ISDSYVDGSS…SGSFHLCPGV (867 aa). Tyr145 bears the Phosphotyrosine mark. The residue at position 169 (Lys169) is an N6-acetyllysine. Basic residues-rich tracts occupy residues 186–197 and 207–249; these read KQKKKKKKKDRG and RERK…KRSR. The tract at residues 197-259 is sufficient for RNA-binding; sequence GRRSESSSPR…STTPAPKSRR (63 aa). Phosphoserine is present on residues Ser220 and Ser222. Positions 263–284 are enriched in low complexity; sequence STSADSASSSDTSRSRSRSAAA. A phosphoserine mark is found at Ser295, Ser300, Ser310, Ser322, and Ser323. Residues 319 to 334 show a composition bias toward low complexity; the sequence is QQPSSPAPSTKQSSSP. A compositionally biased stretch (basic and acidic residues) spans 335–345; it reads YEDKDKKEKSA. 4 positions are modified to phosphoserine: Ser349, Ser351, Ser355, and Ser356. Phosphothreonine occurs at positions 357 and 365. A phosphoserine mark is found at Ser375, Ser385, Ser393, Ser396, Ser402, Ser406, Ser422, Ser433, Ser434, Ser435, Ser438, Ser452, Ser482, Ser484, Ser503, Ser505, Ser507, Ser531, Ser533, and Ser540. A compositionally biased stretch (polar residues) spans 383–396; that stretch reads PSSQEPVNPSSEAS. A compositionally biased stretch (polar residues) spans 425–437; that stretch reads PTKGSRHASSSPE. Over residues 459-533 the composition is skewed to basic residues; it reads NRSHGRAKRD…SPQRRGRSRS (75 aa). The span at 534–543 shows a compositional bias: low complexity; the sequence is PQRPGWSRSR. 3 stretches are compositionally biased toward basic residues: residues 544-561, 568-721, and 730-740; these read NTQR…RSHS, GRSR…RRGR, and NKSRTSQRRSR. 3 positions are modified to phosphoserine: Ser700, Ser702, and Ser704. Phosphoserine is present on residues Ser773, Ser775, and Ser778. Residues 785-817 are compositionally biased toward low complexity; the sequence is SQTPTRRSRSGSSPPKQKSKTPPRQSRSNSPQP. Phosphoserine occurs at positions 821 and 829. Composition is skewed to polar residues over residues 829–851 and 859–874; these read SVTN…SESS and RTPS…PRVK. 2 positions are modified to phosphothreonine: Thr831 and Thr841. Residues Ser846, Ser850, and Ser851 each carry the phosphoserine modification. Composition is skewed to low complexity over residues 875–891 and 898–919; these read SSTP…SPQP and SPRG…TSRT. Residues Ser882, Ser909, Ser924, Ser926, Ser928, Ser940, Ser942, Ser944, Ser945, Ser946, and Ser949 each carry the phosphoserine modification. Thr955 bears the Phosphothreonine mark. Residues 960–1000 are compositionally biased toward polar residues; the sequence is SGSTSPYLKSMLQTPPDQNLSGSKSPCPQKSRDSPTGSSGS. Residues Ser962 and Ser964 each carry the phosphoserine modification. Residue Tyr966 is modified to Phosphotyrosine. Residue Thr973 is modified to Phosphothreonine. Phosphoserine occurs at positions 980, 984, and 993. Thr995 is modified (phosphothreonine). A phosphoserine mark is found at Ser997, Ser1000, Ser1011, Ser1037, and Ser1038. Over residues 1024–1057 the composition is skewed to polar residues; it reads VQQKGHTQTWPDTSSPEVMQTQVESPLLQSKSQT. The tract at residues 1024-1112 is disordered; that stretch reads VQQKGHTQTW…TKPDSSIYPL (89 aa). Thr1044 is modified (phosphothreonine). Phosphoserine is present on residues Ser1048, Ser1064, Ser1066, Ser1067, and Ser1068. The segment covering 1058–1068 has biased composition (low complexity); that stretch reads SPKGSLSRSSS. Thr1071 is modified (phosphothreonine). Residues Ser1077, Ser1087, Ser1094, Ser1097, Ser1117, Ser1151, Ser1159, Ser1175, Ser1188, Ser1216, Ser1225, Ser1229, Ser1230, Ser1269, Ser1276, Ser1278, Ser1284, Ser1287, Ser1294, Ser1305, Ser1325, Ser1338, Ser1339, Ser1340, Ser1343, Ser1359, and Ser1360 each carry the phosphoserine modification. Over residues 1079 to 1092 the composition is skewed to basic and acidic residues; that stretch reads VKQDKSEISTDPKL. Positions 1136–2092 are disordered; sequence IQEDVASSCI…RSPGMLEPLG (957 aa). A compositionally biased stretch (basic and acidic residues) spans 1146–1158; it reads PRDKFSPTQDRPE. Basic and acidic residues predominate over residues 1270-1284; it reads PEHKELSHSPPRENS. A compositionally biased stretch (polar residues) spans 1285–1304; it reads FESSLEFKNSGPVSEVNTGF. Position 1370 is a phosphothreonine (Thr1370). Over residues 1371–1387 the composition is skewed to basic and acidic residues; that stretch reads PSRERSSSASPELKDGL. Phosphoserine occurs at positions 1372, 1378, and 1380. Thr1390 carries the post-translational modification Phosphothreonine. Over residues 1397 to 1408 the composition is skewed to low complexity; it reads SGSSPGLRDGSG. Ser1400 and Ser1407 each carry phosphoserine. The residue at position 1409 (Thr1409) is a Phosphothreonine. Residues 1409–1431 are compositionally biased toward polar residues; it reads TPSRHSLSGSSPGMKDTPQTPSR. Phosphoserine is present on residues Ser1414, Ser1416, Ser1418, and Ser1419. Thr1428 carries the phosphothreonine modification. 2 positions are modified to phosphoserine: Ser1438 and Ser1439. Position 1448 is a phosphothreonine (Thr1448). Phosphoserine occurs at positions 1453, 1455, 1457, 1458, and 1465. The span at 1454–1468 shows a compositional bias: polar residues; it reads HSPSSPERNNKSVTP. Thr1467 bears the Phosphothreonine mark. Residues Ser1473, Ser1475, Ser1477, and Ser1478 each carry the phosphoserine modification. Polar residues predominate over residues 1475–1489; the sequence is SESSVEQKNLARTSP. The residue at position 1487 (Thr1487) is a Phosphothreonine. Residues 1490–1499 show a composition bias toward low complexity; that stretch reads GQRSRSGSSQ. Phosphoserine is present on residues Ser1493, Ser1495, Ser1497, Ser1498, and Ser1508. Positions 1511 to 1523 are enriched in basic and acidic residues; the sequence is ERSESDSSPDSKP. Basic residues predominate over residues 1524–1533; it reads KTRTPLRQRS. Residues Ser1533, Ser1535, Ser1537, Ser1538, Ser1554, Ser1556, Ser1557, Ser1572, Ser1576, Ser1577, Ser1604, Ser1614, Ser1647, Ser1649, and Ser1650 each carry the phosphoserine modification. The span at 1604-1613 shows a compositional bias: low complexity; it reads SPEGSSSSES. Basic residues predominate over residues 1637-1647; it reads KSHTPPRRRSS. Thr1654 bears the Phosphothreonine mark. 6 positions are modified to phosphoserine: Ser1683, Ser1685, Ser1687, Ser1688, Ser1718, and Ser1720. 2 stretches are compositionally biased toward basic residues: residues 1725–1745 and 1754–1772; these read GLQR…RRRD and SRRR…RRRG. A phosphoserine mark is found at Ser1774, Ser1778, Ser1810, Ser1813, Ser1832, and Ser1834. The span at 1776 to 1789 shows a compositional bias: low complexity; it reads YHSRSPTRQESSRT. The span at 1790–1810 shows a compositional bias: basic residues; that stretch reads SSRRRRGRSRTPLTSRKRSRS. The segment covering 1818–2020 has biased composition (basic residues); that stretch reads KRSRSRASPA…PRAARGKRSL (203 aa). Thr1836 is modified (phosphothreonine). 2 positions are modified to phosphoserine: Ser1840 and Ser1846. At Thr1848 the chain carries Phosphothreonine. Phosphoserine is present on residues Ser1849, Ser1869, Ser1872, Ser1876, and Ser1878. Thr1880 and Thr1884 each carry phosphothreonine. A phosphoserine mark is found at Ser1898 and Ser1900. A phosphothreonine mark is found at Thr1902 and Thr1906. Residues Ser1910 and Ser1912 each carry the phosphoserine modification. 2 positions are modified to phosphothreonine: Thr1914 and Thr1918. Phosphoserine occurs at positions 1922, 1924, and 1927. A Phosphothreonine modification is found at Thr1930. 8 positions are modified to phosphoserine: Ser1936, Ser1939, Ser1948, Ser1951, Ser1960, Ser1963, Ser1970, and Ser1972. The residue at position 1974 (Thr1974) is a Phosphothreonine. Phosphoserine occurs at positions 1982 and 1984. Residue Thr1986 is modified to Phosphothreonine. Phosphoserine is present on residues Ser1994, Ser1996, Ser1998, and Ser2019. Position 2021 is a phosphothreonine (Thr2021). The span at 2022–2047 shows a compositional bias: low complexity; the sequence is RSPPAIRRRSASGSSSDRSRSATPPA. Phosphoserine is present on residues Ser2023 and Ser2042. Thr2044 is modified (phosphothreonine). Phosphoserine occurs at positions 2052 and 2054. Thr2056 is subject to Phosphothreonine. A compositionally biased stretch (low complexity) spans 2062 to 2076; it reads SSSRMSCFSRPSMSP. A phosphoserine mark is found at Ser2070, Ser2073, Ser2075, and Ser2084. Thr2096 is subject to Phosphothreonine. An omega-N-methylarginine mark is found at Arg2146, Arg2159, Arg2183, and Arg2198. Ser2224 bears the Phosphoserine mark. Omega-N-methylarginine occurs at positions 2226 and 2240. 2 positions are modified to phosphothreonine: Thr2241 and Thr2254. Ser2262 bears the Phosphoserine mark. Positions 2263-2703 are disordered; it reads LTGSGTPPTA…SNRHRSSRSP (441 aa). 2 positions are modified to phosphothreonine: Thr2268 and Thr2281. The segment covering 2269 to 2283 has biased composition (polar residues); it reads PPTAANYPSSSRTPQ. Arg2295 is subject to Omega-N-methylarginine. Residues Ser2296, Ser2321, and Ser2329 each carry the phosphoserine modification. Position 2334 is a phosphothreonine (Thr2334). Position 2335 is a phosphoserine (Ser2335). An Asymmetric dimethylarginine; alternate modification is found at Arg2337. An Omega-N-methylarginine; alternate modification is found at Arg2337. Phosphoserine is present on residues Ser2347, Ser2351, and Ser2360. The residue at position 2362 (Thr2362) is a Phosphothreonine. Residues Ser2365, Ser2368, Ser2381, Ser2384, Ser2404, and Ser2408 each carry the phosphoserine modification. 2 stretches are compositionally biased toward polar residues: residues 2410 to 2443 and 2467 to 2476; these read FSDQ…SASD and TGAQQPSTLA. Positions 2487–2521 are enriched in low complexity; sequence SSSSSSSSSSSSSSSSSSSSSSSSGSSSSDSEGSS. Residue Ser2535 is modified to Phosphoserine. Position 2537 is a phosphothreonine (Thr2537). Lys2541 participates in a covalent cross-link: Glycyl lysine isopeptide (Lys-Gly) (interchain with G-Cter in SUMO2). Phosphothreonine is present on Thr2553. Positions 2562–2602 are enriched in low complexity; the sequence is SSSSSSSSSSSSSSSSSSSSSSSSSSSSSSSSSSSSSSSSS. Over residues 2605–2622 the composition is skewed to pro residues; it reads PAKPGPQALPKPASPKKP. Residues Ser2618, Ser2629, Ser2631, Ser2638, Ser2642, Ser2644, Ser2646, Ser2648, Ser2656, and Ser2660 each carry the phosphoserine modification. Basic and acidic residues predominate over residues 2623–2643; sequence PPGERRSRSPRKPIDSLRDSR. Position 2689 is a phosphothreonine (Thr2689). Ser2691 bears the Phosphoserine mark. The span at 2694–2703 shows a compositional bias: basic residues; that stretch reads SNRHRSSRSP.

This sequence belongs to the CWC21 family. Component of pre-catalytic, catalytic and post-catalytic spliceosome complexes. Found in a pre-mRNA splicing complex with SFRS4, SFRS5, SNRP70, SNRPA1, SRRM1 and SRRM2. Component of the minor spliceosome, which splices U12-type introns. Interacts with DHX8. Interacts with CACTIN.

The protein resides in the nucleus. Its subcellular location is the nucleus speckle. Functionally, required for pre-mRNA splicing as component of the spliceosome. As a component of the minor spliceosome, involved in the splicing of U12-type introns in pre-mRNAs. The protein is Serine/arginine repetitive matrix protein 2 (Srrm2) of Mus musculus (Mouse).